Reading from the N-terminus, the 304-residue chain is Homoserine kinase (304 aa).

91-101 (PLGKGMGSSAA) provides a ligand contact to ATP.

The protein belongs to the GHMP kinase family. Homoserine kinase subfamily.

It localises to the cytoplasm. The enzyme catalyses L-homoserine + ATP = O-phospho-L-homoserine + ADP + H(+). It functions in the pathway amino-acid biosynthesis; L-threonine biosynthesis; L-threonine from L-aspartate: step 4/5. Catalyzes the ATP-dependent phosphorylation of L-homoserine to L-homoserine phosphate. The protein is Homoserine kinase of Solibacter usitatus (strain Ellin6076).